The sequence spans 620 residues: Methionine--tRNA ligase (620 aa).

Positions 11–21 (PYANGPRHIGH) match the 'HIGH' region motif. 4 residues coordinate Zn(2+): Cys-143, Cys-146, Cys-156, and Cys-159. Residues 347–351 (KFSSS) carry the 'KMSKS' region motif. Ser-350 contributes to the ATP binding site.

Belongs to the class-I aminoacyl-tRNA synthetase family. MetG type 1 subfamily. Monomer. Requires Zn(2+) as cofactor.

It is found in the cytoplasm. The enzyme catalyses tRNA(Met) + L-methionine + ATP = L-methionyl-tRNA(Met) + AMP + diphosphate. Functionally, is required not only for elongation of protein synthesis but also for the initiation of all mRNA translation through initiator tRNA(fMet) aminoacylation. This Bifidobacterium adolescentis (strain ATCC 15703 / DSM 20083 / NCTC 11814 / E194a) protein is Methionine--tRNA ligase.